A 758-amino-acid chain; its full sequence is Relaxin receptor 1 (758 aa).

Residues 1 to 409 lie on the Extracellular side of the membrane; it reads MTSGPFFFCI…ENLLASIIQR (409 aa). Residues 26–63 form the LDL-receptor class A domain; that stretch reads SCPLGSFPCGNMSRCLPQLLHCNGVDDCGNRADEDHCG. 3 disulfide bridges follow: cysteine 27/cysteine 40, cysteine 34/cysteine 53, and cysteine 47/cysteine 62. Residue asparagine 36 is glycosylated (N-linked (GlcNAc...) asparagine). The Ca(2+) site is built by leucine 45, asparagine 48, valine 50, aspartate 52, aspartate 58, and glutamate 59. An N-linked (GlcNAc...) asparagine glycan is attached at asparagine 127. LRR repeat units lie at residues 127–148, 151–172, 175–196, 199–220, 223–244, 248–269, 272–293, 296–317, 320–341, and 344–365; these read NVTV…GFRK, ELQK…AFRG, SLTK…VFED, RLEW…TFYG, SLIL…PLCQ, RLHW…TFIS, NLTV…AFTH, KLDE…IFKD, ELSQ…QFDC, and KLKS…MFRP. 2 N-linked (GlcNAc...) asparagine glycosylation sites follow: asparagine 264 and asparagine 272. A glycan (N-linked (GlcNAc...) asparagine) is linked at asparagine 325. Asparagine 368 carries N-linked (GlcNAc...) asparagine glycosylation. A helical transmembrane segment spans residues 410–430; that stretch reads VFVWVVSAITCFGNIFVICMR. Topologically, residues 431 to 443 are cytoplasmic; that stretch reads PYIRSENKLHAMS. A helical transmembrane segment spans residues 444–464; that stretch reads IISLCCADCLMGVYLFVIGAF. The Extracellular portion of the chain corresponds to 465–486; sequence DLKFRGEYNKHAQPWMESVHCQ. Cysteine 485 and cysteine 563 are joined by a disulfide. A helical membrane pass occupies residues 487–507; that stretch reads FMGSLAILSTEVSVLLLTFLT. At 508–527 the chain is on the cytoplasmic side; the sequence is LEKYICIVYPFRCLRPRKCR. Residues 528–548 form a helical membrane-spanning segment; it reads TITVLIFIWIIGFIVAFAPLG. Residues 549–577 lie on the Extracellular side of the membrane; sequence NKEFFKNYYGTNGVCFPLHSEDTGSTGAQ. The helical transmembrane segment at 578 to 598 threads the bilayer; it reads IYSVVIFLGINLVAFIIIVFS. Topologically, residues 599-629 are cytoplasmic; sequence YGSMFYSVHQSSVTVTEIQKQVKKEVVLAKR. Residues 630-650 traverse the membrane as a helical segment; that stretch reads FFFIVFTDALCWIPIFILKFL. Residue serine 651 is a topological domain, extracellular. The helical transmembrane segment at 652 to 672 threads the bilayer; sequence LLQVEIPDSITSWVVIFILPI. The Cytoplasmic portion of the chain corresponds to 673 to 758; the sequence is NSALNPIIYT…SQSSRLNSYS (86 aa).

It belongs to the G-protein coupled receptor 1 family. In terms of assembly, interacts with C1QTNF8.

The protein localises to the cell membrane. Functionally, receptor for relaxins. The activity of this receptor is mediated by G proteins leading to stimulation of adenylate cyclase and an increase of cAMP. Binding of the ligand may also activate a tyrosine kinase pathway that inhibits the activity of a phosphodiesterase that degrades cAMP. This is Relaxin receptor 1 (Rxfp1) from Mus musculus (Mouse).